A 130-amino-acid polypeptide reads, in one-letter code: Iron-sulfur cluster insertion protein ErpA (130 aa).

Cys-58, Cys-122, and Cys-124 together coordinate iron-sulfur cluster.

The protein belongs to the HesB/IscA family. In terms of assembly, homodimer. Requires iron-sulfur cluster as cofactor.

Required for insertion of 4Fe-4S clusters for at least IspG. The chain is Iron-sulfur cluster insertion protein ErpA from Stenotrophomonas maltophilia (strain R551-3).